The chain runs to 547 residues: uncharacterized protein (547 aa).

To B.subtilis RocB.

This is an uncharacterized protein from Bacillus subtilis (strain 168).